A 209-amino-acid polypeptide reads, in one-letter code: Guanylate kinase (209 aa).

The Guanylate kinase-like domain occupies 5–184 (GLLIVFSGPS…AAERVKRVIE (180 aa)). An ATP-binding site is contributed by 12–19 (GPSGVGKG).

This sequence belongs to the guanylate kinase family.

The protein resides in the cytoplasm. It carries out the reaction GMP + ATP = GDP + ADP. Its function is as follows. Essential for recycling GMP and indirectly, cGMP. The protein is Guanylate kinase of Streptococcus thermophilus (strain CNRZ 1066).